The primary structure comprises 454 residues: MSTTVIILAAGKGTRMRSQLPKVLQPLAGRPLLGHVIKTAKQLLAENIITIYGHGGDHVKKTFAQENIQWVEQAEQLGTGHAVQMTLPVLPKDGISLILYGDVPLVRQTTLEQLIEVSNKTGIGMITLHVDNPTGYGRIVRQDGKIQAIVEHKDATEAQRQIQEINTGIYCVSNAKLHEWLPKLSNENAQGEYYLTDIVAMAVADGLEIASIQPELAFEVEGVNDRLQLAALEREFQKQQAKELMQQGVTFADPARFDLRGTVKVGHDVRIDVNVIIEGDCELGDFVEIGAGCILKNTTIAAGTKVQAYSVFDGAVVGENTQIGPFARLRPGAKLANEVHIGNFVEVKNTTIGLGSKANHFTYLGDAEIGAESNIGAGTITCNYDGANKHKTTIGDAVFIGSNSSLVAPVTIGNGATVGAGSVITKDVAEQSLSFERAQQISKANYQRPQKLKK.

A pyrophosphorylase region spans residues 1–226 (MSTTVIILAA…AFEVEGVNDR (226 aa)). UDP-N-acetyl-alpha-D-glucosamine is bound by residues 8 to 11 (LAAG), Lys-22, Gln-73, 78 to 79 (GT), 100 to 102 (YGD), Gly-137, Glu-151, Asn-166, and Asn-224. Asp-102 contributes to the Mg(2+) binding site. Residue Asn-224 coordinates Mg(2+). The tract at residues 227 to 247 (LQLAALEREFQKQQAKELMQQ) is linker. An N-acetyltransferase region spans residues 248 to 454 (GVTFADPARF…NYQRPQKLKK (207 aa)). UDP-N-acetyl-alpha-D-glucosamine-binding residues include Arg-330 and Lys-348. Catalysis depends on His-360, which acts as the Proton acceptor. UDP-N-acetyl-alpha-D-glucosamine is bound by residues Tyr-363 and Asn-374. Residues Ala-377, 383-384 (NY), Ser-402, Ala-420, and Arg-437 contribute to the acetyl-CoA site.

It in the N-terminal section; belongs to the N-acetylglucosamine-1-phosphate uridyltransferase family. This sequence in the C-terminal section; belongs to the transferase hexapeptide repeat family. Homotrimer. It depends on Mg(2+) as a cofactor.

The protein localises to the cytoplasm. The catalysed reaction is alpha-D-glucosamine 1-phosphate + acetyl-CoA = N-acetyl-alpha-D-glucosamine 1-phosphate + CoA + H(+). It carries out the reaction N-acetyl-alpha-D-glucosamine 1-phosphate + UTP + H(+) = UDP-N-acetyl-alpha-D-glucosamine + diphosphate. It participates in nucleotide-sugar biosynthesis; UDP-N-acetyl-alpha-D-glucosamine biosynthesis; N-acetyl-alpha-D-glucosamine 1-phosphate from alpha-D-glucosamine 6-phosphate (route II): step 2/2. Its pathway is nucleotide-sugar biosynthesis; UDP-N-acetyl-alpha-D-glucosamine biosynthesis; UDP-N-acetyl-alpha-D-glucosamine from N-acetyl-alpha-D-glucosamine 1-phosphate: step 1/1. The protein operates within bacterial outer membrane biogenesis; LPS lipid A biosynthesis. Catalyzes the last two sequential reactions in the de novo biosynthetic pathway for UDP-N-acetylglucosamine (UDP-GlcNAc). The C-terminal domain catalyzes the transfer of acetyl group from acetyl coenzyme A to glucosamine-1-phosphate (GlcN-1-P) to produce N-acetylglucosamine-1-phosphate (GlcNAc-1-P), which is converted into UDP-GlcNAc by the transfer of uridine 5-monophosphate (from uridine 5-triphosphate), a reaction catalyzed by the N-terminal domain. This chain is Bifunctional protein GlmU, found in Acinetobacter baumannii (strain ACICU).